Here is a 301-residue protein sequence, read N- to C-terminus: uncharacterized protein (301 aa).

A run of 9 helical transmembrane segments spans residues 1–21 (MSWI…LRII), 33–53 (SVLF…YVYY), 72–92 (AMSL…KIPW), 101–121 (FGII…IILI), 124–144 (FAWL…KTFY), 194–214 (VLIE…IFAI), 220–240 (IIYT…FCLA), 253–273 (LALI…IAIP), and 274–294 (EYVA…ASII).

The protein belongs to the TerC family.

The protein localises to the cell membrane. This is an uncharacterized protein from Rickettsia conorii (strain ATCC VR-613 / Malish 7).